Consider the following 2197-residue polypeptide: Non-reducing polyketide synthase Preu6 (2197 aa).

The interval 14-253 (FFCPQSRAPP…HNPENAELAK (240 aa)) is N-terminal acylcarrier protein transacylase domain (SAT). Positions 375–797 (DDAIAITGAS…GSNAAVICVE (423 aa)) constitute a Ketosynthase family 3 (KS3) domain. Residues Cys-546, His-681, and His-720 each act as for beta-ketoacyl synthase activity in the active site. The tract at residues 901-1198 (LVFSGQNTNA…SKPDSQVFQS (298 aa)) is malonyl-CoA:ACP transacylase (MAT) domain. Ser-988 functions as the For acyl/malonyl transferase activity in the catalytic mechanism. Positions 1258–1282 (ATEASQASTTSDTIQSTPTQTVQSP) are disordered. Residues 1260 to 1281 (EASQASTTSDTIQSTPTQTVQS) are compositionally biased toward polar residues. Residues 1276–1403 (TQTVQSPPKL…GRVILTESSV (128 aa)) are N-terminal hotdog fold. One can recognise a PKS/mFAS DH domain in the interval 1276 to 1576 (TQTVQSPPKL…FNKMEISKLA (301 aa)). Residues 1284–1575 (KLISRLASLQ…RFNKMEISKL (292 aa)) form a product template (PT) domain region. His-1310 (proton acceptor; for dehydratase activity) is an active-site residue. The interval 1424–1576 (AEKLMSSRAY…FNKMEISKLA (153 aa)) is C-terminal hotdog fold. The Proton donor; for dehydratase activity role is filled by Asp-1487. Over residues 1581 to 1591 (SVNASSPTGGR) the composition is skewed to polar residues. Residues 1581–1614 (SVNASSPTGGRTQPPAAPKTQAQPMASRPSPTPL) form a disordered region. 2 consecutive Carrier domains span residues 1639 to 1719 (NDIG…SQKM) and 1748 to 1824 (NSIT…ATPP). 2 positions are modified to O-(pantetheine 4'-phosphoryl)serine: Ser-1673 and Ser-1782. The segment at 1817 to 1841 (LGASATPPSTTGSSTPGDISTAATT) is disordered. The segment covering 1818 to 1833 (GASATPPSTTGSSTPG) has biased composition (low complexity). The tract at residues 1870–2197 (DSYQVKTVEY…PGLDFLIQNA (328 aa)) is thioesterase (TE) domain. Residues Ser-1990 and Asp-2137 each act as for thioesterase activity in the active site.

Requires pantetheine 4'-phosphate as cofactor.

The catalysed reaction is 6 malonyl-CoA + 2 acetyl-CoA + 5 H(+) = o-orsellinate depside + 6 CO2 + 8 CoA + H2O. Functionally, non-reducing polyketide synthase; part of a gene cluster that mediates the biosynthesis of a yet unidentified natural product. The first step in the pathway is performed by Preu6 that condenses 2 acetyl-CoA starter units with 6 malonyl-CoA units to produce lecanoric acid (LA), also known as orsellinate depside, an intermediate that has significant antifungal activity against the plant pathogen Botryosphaeria berengeriana. The biosynthesis probably occurs via the formation of 2 orsellinate intermediates fused together by the C-terminal thioesterase (TE) domain that finally releases lecanoric acid. The protein is Non-reducing polyketide synthase Preu6 of Preussia isomera (Coprophilous fungus).